The primary structure comprises 228 residues: Cytochrome c oxidase subunit 2 (228 aa).

Residues 1–14 (MAYPLQLGLQDASS) lie on the Mitochondrial intermembrane side of the membrane. A helical transmembrane segment spans residues 15–45 (PIMEELTNFHDHTLMIVFLISSLVLYLISLM). At 46–59 (LTTKLIHTSTMDAQ) the chain is on the mitochondrial matrix side. A helical membrane pass occupies residues 60 to 87 (EVETIWTILPAIILILIALPSLRILYMM). Over 88-228 (DEINNPVLTV…FENWSVSMTQ (141 aa)) the chain is Mitochondrial intermembrane. Cu cation-binding residues include H161, C196, E198, C200, H204, and M207. E198 is a Mg(2+) binding site.

This sequence belongs to the cytochrome c oxidase subunit 2 family. Component of the cytochrome c oxidase (complex IV, CIV), a multisubunit enzyme composed of 14 subunits. The complex is composed of a catalytic core of 3 subunits MT-CO1, MT-CO2 and MT-CO3, encoded in the mitochondrial DNA, and 11 supernumerary subunits COX4I, COX5A, COX5B, COX6A, COX6B, COX6C, COX7A, COX7B, COX7C, COX8 and NDUFA4, which are encoded in the nuclear genome. The complex exists as a monomer or a dimer and forms supercomplexes (SCs) in the inner mitochondrial membrane with NADH-ubiquinone oxidoreductase (complex I, CI) and ubiquinol-cytochrome c oxidoreductase (cytochrome b-c1 complex, complex III, CIII), resulting in different assemblies (supercomplex SCI(1)III(2)IV(1) and megacomplex MCI(2)III(2)IV(2)). Found in a complex with TMEM177, COA6, COX18, COX20, SCO1 and SCO2. Interacts with TMEM177 in a COX20-dependent manner. Interacts with COX20. Interacts with COX16. Cu cation serves as cofactor.

Its subcellular location is the mitochondrion inner membrane. The catalysed reaction is 4 Fe(II)-[cytochrome c] + O2 + 8 H(+)(in) = 4 Fe(III)-[cytochrome c] + 2 H2O + 4 H(+)(out). In terms of biological role, component of the cytochrome c oxidase, the last enzyme in the mitochondrial electron transport chain which drives oxidative phosphorylation. The respiratory chain contains 3 multisubunit complexes succinate dehydrogenase (complex II, CII), ubiquinol-cytochrome c oxidoreductase (cytochrome b-c1 complex, complex III, CIII) and cytochrome c oxidase (complex IV, CIV), that cooperate to transfer electrons derived from NADH and succinate to molecular oxygen, creating an electrochemical gradient over the inner membrane that drives transmembrane transport and the ATP synthase. Cytochrome c oxidase is the component of the respiratory chain that catalyzes the reduction of oxygen to water. Electrons originating from reduced cytochrome c in the intermembrane space (IMS) are transferred via the dinuclear copper A center (CU(A)) of subunit 2 and heme A of subunit 1 to the active site in subunit 1, a binuclear center (BNC) formed by heme A3 and copper B (CU(B)). The BNC reduces molecular oxygen to 2 water molecules using 4 electrons from cytochrome c in the IMS and 4 protons from the mitochondrial matrix. This Meriones shawi (Shaw's jird) protein is Cytochrome c oxidase subunit 2 (MT-CO2).